A 492-amino-acid polypeptide reads, in one-letter code: N-succinylglutamate 5-semialdehyde dehydrogenase (492 aa).

Gly-220–Gly-225 contributes to the NAD(+) binding site. Residues Glu-243 and Cys-277 contribute to the active site.

This sequence belongs to the aldehyde dehydrogenase family. AstD subfamily.

The catalysed reaction is N-succinyl-L-glutamate 5-semialdehyde + NAD(+) + H2O = N-succinyl-L-glutamate + NADH + 2 H(+). It functions in the pathway amino-acid degradation; L-arginine degradation via AST pathway; L-glutamate and succinate from L-arginine: step 4/5. Its function is as follows. Catalyzes the NAD-dependent reduction of succinylglutamate semialdehyde into succinylglutamate. This Escherichia coli O6:K15:H31 (strain 536 / UPEC) protein is N-succinylglutamate 5-semialdehyde dehydrogenase.